Here is an 838-residue protein sequence, read N- to C-terminus: Protein P (838 aa).

Residues 1–179 (MPLSYQHFRK…FCGSPYSWEQ (179 aa)) form a terminal protein domain (TP) region. Positions 180 to 341 (ELQHSQRHGD…YCLSHLVNLL (162 aa)) are spacer. Positions 218–242 (LGLQPHQGPLATSQPGRSGSIRPRA) are disordered. The polymerase/reverse transcriptase domain (RT) stretch occupies residues 342–685 (EDWGPCVEHG…YLNLYPVARQ (344 aa)). Positions 352-595 (EHHIRIPRTP…YSLNFMGYVI (244 aa)) constitute a Reverse transcriptase domain. Mg(2+)-binding residues include D424, D546, and D547.

This sequence belongs to the hepadnaviridae P protein family.

It carries out the reaction DNA(n) + a 2'-deoxyribonucleoside 5'-triphosphate = DNA(n+1) + diphosphate. It catalyses the reaction Endonucleolytic cleavage to 5'-phosphomonoester.. With respect to regulation, activated by host HSP70 and HSP40 in vitro to be able to bind the epsilon loop of the pgRNA. Because deletion of the RNase H region renders the protein partly chaperone-independent, the chaperones may be needed indirectly to relieve occlusion of the RNA-binding site by this domain. Inhibited by several reverse-transcriptase inhibitors: Lamivudine, Adefovir and Entecavir. Functionally, multifunctional enzyme that converts the viral RNA genome into dsDNA in viral cytoplasmic capsids. This enzyme displays a DNA polymerase activity that can copy either DNA or RNA templates, and a ribonuclease H (RNase H) activity that cleaves the RNA strand of RNA-DNA heteroduplexes in a partially processive 3'- to 5'-endonucleasic mode. Neo-synthesized pregenomic RNA (pgRNA) are encapsidated together with the P protein, and reverse-transcribed inside the nucleocapsid. Initiation of reverse-transcription occurs first by binding the epsilon loop on the pgRNA genome, and is initiated by protein priming, thereby the 5'-end of (-)DNA is covalently linked to P protein. Partial (+)DNA is synthesized from the (-)DNA template and generates the relaxed circular DNA (RC-DNA) genome. After budding and infection, the RC-DNA migrates in the nucleus, and is converted into a plasmid-like covalently closed circular DNA (cccDNA). The activity of P protein does not seem to be necessary for cccDNA generation, and is presumably released from (+)DNA by host nuclear DNA repair machinery. In Homo sapiens (Human), this protein is Protein P.